The following is a 177-amino-acid chain: Nucleoside triphosphate/diphosphate phosphatase (177 aa).

The Proton donor role is filled by Arg23. Mg(2+) is bound by residues Asn87, Asp103, Asp105, Asp107, Asp120, and Glu123.

Belongs to the Ntdp family. Requires Mg(2+) as cofactor.

The catalysed reaction is a ribonucleoside 5'-triphosphate + H2O = a ribonucleoside 5'-diphosphate + phosphate + H(+). The enzyme catalyses a ribonucleoside 5'-diphosphate + H2O = a ribonucleoside 5'-phosphate + phosphate + H(+). Its function is as follows. Has nucleoside phosphatase activity towards nucleoside triphosphates and nucleoside diphosphates. This is Nucleoside triphosphate/diphosphate phosphatase from Streptococcus pyogenes serotype M3 (strain ATCC BAA-595 / MGAS315).